A 54-amino-acid polypeptide reads, in one-letter code: Secreted virulence factor MC69 (54 aa).

The first 16 residues, 1–16, serve as a signal peptide directing secretion; that stretch reads MKAAFVLALCASLASA. Cysteine 36 and cysteine 46 are joined by a disulfide.

The protein belongs to the MC69 virulence factor family.

The protein resides in the secreted. Its function is as follows. Secreted protein required for appressorial penetration of intact host epidermal cells and for pathogenicity. The sequence is that of Secreted virulence factor MC69 from Pyricularia oryzae (strain 70-15 / ATCC MYA-4617 / FGSC 8958) (Rice blast fungus).